A 509-amino-acid chain; its full sequence is Putative ATP-dependent RNA helicase QP509L (509 aa).

Positions 110–262 constitute a Helicase ATP-binding domain; sequence KKLLPPYGRF…KIIIHHLGQP (153 aa). Position 123 to 130 (123 to 130) interacts with ATP; that stretch reads LNTGLGKT. Residues 215-218 carry the DEAH box motif; sequence DEAH.

The protein belongs to the DEAD box helicase family. DEAH subfamily.

The catalysed reaction is ATP + H2O = ADP + phosphate + H(+). The protein is Putative ATP-dependent RNA helicase QP509L of African swine fever virus (isolate Tick/Malawi/Lil 20-1/1983) (ASFV).